Reading from the N-terminus, the 351-residue chain is Transmembrane protein 255A (351 aa).

The next 4 membrane-spanning stretches (helical) occupy residues 30–50, 57–77, 89–109, and 226–246; these read IYVT…GLAA, VTVG…LGII, LVAS…CAIV, and TILN…LGGF. Residues 302–331 are disordered; it reads FPSSPPSGLSDEQEPQSPSPSPSYMWSSSA.

Belongs to the TMEM255 family.

Its subcellular location is the membrane. In Rattus norvegicus (Rat), this protein is Transmembrane protein 255A (Tmem255a).